A 25-amino-acid chain; its full sequence is Ocellatin-1 (25 aa).

V25 is subject to Valine amide.

As to expression, expressed by the skin dorsal glands.

The protein resides in the secreted. Functionally, has hemolytic activity against human erythrocytes and antibacterial activity against the Gram-negative bacterium E.coli. In Leptodactylus ocellatus (Argus frog), this protein is Ocellatin-1.